A 231-amino-acid polypeptide reads, in one-letter code: 2-C-methyl-D-erythritol 4-phosphate cytidylyltransferase (231 aa).

Belongs to the IspD/TarI cytidylyltransferase family. IspD subfamily. Homodimer.

The catalysed reaction is 2-C-methyl-D-erythritol 4-phosphate + CTP + H(+) = 4-CDP-2-C-methyl-D-erythritol + diphosphate. It participates in isoprenoid biosynthesis; isopentenyl diphosphate biosynthesis via DXP pathway; isopentenyl diphosphate from 1-deoxy-D-xylulose 5-phosphate: step 2/6. Its function is as follows. Catalyzes the formation of 4-diphosphocytidyl-2-C-methyl-D-erythritol from CTP and 2-C-methyl-D-erythritol 4-phosphate (MEP). In Citrobacter koseri (strain ATCC BAA-895 / CDC 4225-83 / SGSC4696), this protein is 2-C-methyl-D-erythritol 4-phosphate cytidylyltransferase.